Consider the following 182-residue polypeptide: Transcription termination/antitermination protein NusG (182 aa).

This sequence belongs to the NusG family.

Its function is as follows. Participates in transcription elongation, termination and antitermination. The sequence is that of Transcription termination/antitermination protein NusG from Chlamydia trachomatis serovar D (strain ATCC VR-885 / DSM 19411 / UW-3/Cx).